The following is a 298-amino-acid chain: Serpentine receptor class delta-34 (298 aa).

6 helical membrane passes run 10-30 (SSIM…FTQV), 54-74 (ACFF…FAIP), 99-119 (MILL…VITY), 158-178 (LATN…IVFI), 207-227 (LTIQ…AHLI), and 242-262 (VLYM…IVTI).

Belongs to the nematode receptor-like protein srd family.

It is found in the membrane. This chain is Serpentine receptor class delta-34 (srd-34), found in Caenorhabditis elegans.